The sequence spans 182 residues: ATP synthase subunit delta (182 aa).

It belongs to the ATPase delta chain family. In terms of assembly, F-type ATPases have 2 components, F(1) - the catalytic core - and F(0) - the membrane proton channel. F(1) has five subunits: alpha(3), beta(3), gamma(1), delta(1), epsilon(1). F(0) has three main subunits: a(1), b(2) and c(10-14). The alpha and beta chains form an alternating ring which encloses part of the gamma chain. F(1) is attached to F(0) by a central stalk formed by the gamma and epsilon chains, while a peripheral stalk is formed by the delta and b chains.

It is found in the cell inner membrane. F(1)F(0) ATP synthase produces ATP from ADP in the presence of a proton or sodium gradient. F-type ATPases consist of two structural domains, F(1) containing the extramembraneous catalytic core and F(0) containing the membrane proton channel, linked together by a central stalk and a peripheral stalk. During catalysis, ATP synthesis in the catalytic domain of F(1) is coupled via a rotary mechanism of the central stalk subunits to proton translocation. In terms of biological role, this protein is part of the stalk that links CF(0) to CF(1). It either transmits conformational changes from CF(0) to CF(1) or is implicated in proton conduction. The sequence is that of ATP synthase subunit delta from Persephonella marina (strain DSM 14350 / EX-H1).